The chain runs to 250 residues: MSGHSKWATTKHKKAVIDAKRGKLFAKMIKNIEVAARTGGADPAGNPTLFDAIQKAKKSSVPNKNIDSAVKRGAGLEAGGADYETIMYEGYGPNGVAVLIECLTDNRNRAASDVRVAMTRNGGNMADPGSVSYLFNRKGVVIVPKGELSEDDVLGAVLDAGAEEVNDLGESFEVVSEATDLVAVRTALQDAGIDYDSADANFVPTMQVELDEEGARKIFKLIDALEDSDDVQNVFANFDVSDEVMEKVDA.

This sequence belongs to the TACO1 family.

Its subcellular location is the cytoplasm. The polypeptide is Probable transcriptional regulatory protein SAV_6832 (Streptomyces avermitilis (strain ATCC 31267 / DSM 46492 / JCM 5070 / NBRC 14893 / NCIMB 12804 / NRRL 8165 / MA-4680)).